Here is a 194-residue protein sequence, read N- to C-terminus: Peptidyl-tRNA hydrolase (194 aa).

A tRNA-binding site is contributed by Tyr-17. Catalysis depends on His-22, which acts as the Proton acceptor. TRNA contacts are provided by Tyr-68, Asn-70, and Asn-115.

It belongs to the PTH family. As to quaternary structure, monomer.

The protein resides in the cytoplasm. It carries out the reaction an N-acyl-L-alpha-aminoacyl-tRNA + H2O = an N-acyl-L-amino acid + a tRNA + H(+). Its function is as follows. Hydrolyzes ribosome-free peptidyl-tRNAs (with 1 or more amino acids incorporated), which drop off the ribosome during protein synthesis, or as a result of ribosome stalling. Functionally, catalyzes the release of premature peptidyl moieties from peptidyl-tRNA molecules trapped in stalled 50S ribosomal subunits, and thus maintains levels of free tRNAs and 50S ribosomes. The polypeptide is Peptidyl-tRNA hydrolase (Pseudoalteromonas atlantica (strain T6c / ATCC BAA-1087)).